The primary structure comprises 316 residues: 4-hydroxy-3-methylbut-2-enyl diphosphate reductase (316 aa).

Residue Cys-12 coordinates [4Fe-4S] cluster. (2E)-4-hydroxy-3-methylbut-2-enyl diphosphate-binding residues include His-41 and His-74. Dimethylallyl diphosphate is bound by residues His-41 and His-74. The isopentenyl diphosphate site is built by His-41 and His-74. Residue Cys-96 participates in [4Fe-4S] cluster binding. (2E)-4-hydroxy-3-methylbut-2-enyl diphosphate is bound at residue His-124. Dimethylallyl diphosphate is bound at residue His-124. His-124 serves as a coordination point for isopentenyl diphosphate. Residue Glu-126 is the Proton donor of the active site. Thr-167 provides a ligand contact to (2E)-4-hydroxy-3-methylbut-2-enyl diphosphate. Cys-197 contributes to the [4Fe-4S] cluster binding site. Residues Ser-225, Ser-226, Asn-227, and Ser-269 each coordinate (2E)-4-hydroxy-3-methylbut-2-enyl diphosphate. The dimethylallyl diphosphate site is built by Ser-225, Ser-226, Asn-227, and Ser-269. Isopentenyl diphosphate contacts are provided by Ser-225, Ser-226, Asn-227, and Ser-269.

It belongs to the IspH family. Homodimer. It depends on [4Fe-4S] cluster as a cofactor.

It catalyses the reaction isopentenyl diphosphate + 2 oxidized [2Fe-2S]-[ferredoxin] + H2O = (2E)-4-hydroxy-3-methylbut-2-enyl diphosphate + 2 reduced [2Fe-2S]-[ferredoxin] + 2 H(+). It carries out the reaction dimethylallyl diphosphate + 2 oxidized [2Fe-2S]-[ferredoxin] + H2O = (2E)-4-hydroxy-3-methylbut-2-enyl diphosphate + 2 reduced [2Fe-2S]-[ferredoxin] + 2 H(+). The protein operates within isoprenoid biosynthesis; dimethylallyl diphosphate biosynthesis; dimethylallyl diphosphate from (2E)-4-hydroxy-3-methylbutenyl diphosphate: step 1/1. Its pathway is isoprenoid biosynthesis; isopentenyl diphosphate biosynthesis via DXP pathway; isopentenyl diphosphate from 1-deoxy-D-xylulose 5-phosphate: step 6/6. Catalyzes the conversion of 1-hydroxy-2-methyl-2-(E)-butenyl 4-diphosphate (HMBPP) into a mixture of isopentenyl diphosphate (IPP) and dimethylallyl diphosphate (DMAPP). Acts in the terminal step of the DOXP/MEP pathway for isoprenoid precursor biosynthesis. The polypeptide is 4-hydroxy-3-methylbut-2-enyl diphosphate reductase (Escherichia coli (strain UTI89 / UPEC)).